Consider the following 340-residue polypeptide: Guanine nucleotide-binding protein G(I)/G(S)/G(T) subunit beta-3 (340 aa).

WD repeat units lie at residues 53–83 (GHLA…IVWD), 95–125 (LRSS…SIYS), 141–170 (AHTG…ALWD), 182–212 (GHTG…KLWD), 224–254 (GHES…RLFD), 268–298 (SIIC…NIWD), and 310–340 (GHDN…KVWN).

It belongs to the WD repeat G protein beta family. G proteins are composed of 3 units, alpha, beta and gamma. Interacts with RASD2.

The protein resides in the cytoplasm. Its subcellular location is the perinuclear region. Its function is as follows. Guanine nucleotide-binding proteins (G proteins) are involved as a modulator or transducer in various transmembrane signaling systems. The beta and gamma chains are required for the GTPase activity, for replacement of GDP by GTP, and for G protein-effector interaction. In Canis lupus familiaris (Dog), this protein is Guanine nucleotide-binding protein G(I)/G(S)/G(T) subunit beta-3 (GNB3).